The sequence spans 446 residues: Putative zinc metalloprotease NMA0084 (446 aa).

A Zn(2+)-binding site is contributed by H18. E19 is an active-site residue. H22 provides a ligand contact to Zn(2+). A run of 3 helical transmembrane segments spans residues 93 to 115 (IAIVAAGPLTNLALAVLLYGLSF), 376 to 398 (FLALVSISLGVLNLLPVPVLDGG), and 419 to 438 (NIGLRFGLALMMLMMAVAFF). One can recognise a PDZ domain in the interval 100–181 (PLTNLALAVL…KVAVGVQTAS (82 aa)).

It belongs to the peptidase M50B family. Zn(2+) serves as cofactor.

The protein localises to the cell inner membrane. The sequence is that of Putative zinc metalloprotease NMA0084 from Neisseria meningitidis serogroup A / serotype 4A (strain DSM 15465 / Z2491).